Reading from the N-terminus, the 380-residue chain is Guanine nucleotide-binding protein subunit beta (380 aa).

WD repeat units follow at residues 64 to 94, 106 to 136, 155 to 186, 203 to 234, 247 to 277, 296 to 326, and 342 to 372; these read GHSG…IVWN, LHCP…SIFN, GHKG…VLWD, GHTA…RLWD, GHEG…RLFD, NELP…YVWD, and SHEG…KIWA.

Belongs to the WD repeat G protein beta family. In terms of assembly, g proteins are composed of 3 units, alpha, beta and gamma. Interacts with the gamma subunits RGG1 and RGG2.

It localises to the cell membrane. Guanine nucleotide-binding proteins (G proteins) are involved as modulators or transducers in various transmembrane signaling systems. The beta and gamma chains are required for the GTPase activity, for replacement of GDP by GTP, and for G protein-effector interaction. The protein is Guanine nucleotide-binding protein subunit beta of Oryza sativa subsp. japonica (Rice).